We begin with the raw amino-acid sequence, 219 residues long: Ribose-5-phosphate isomerase A (219 aa).

Substrate is bound by residues 29–32 (TGST), 82–85 (DGAD), and 95–98 (KGGG). Glu104 acts as the Proton acceptor in catalysis. Lys122 provides a ligand contact to substrate.

It belongs to the ribose 5-phosphate isomerase family. In terms of assembly, homodimer.

It catalyses the reaction aldehydo-D-ribose 5-phosphate = D-ribulose 5-phosphate. The protein operates within carbohydrate degradation; pentose phosphate pathway; D-ribose 5-phosphate from D-ribulose 5-phosphate (non-oxidative stage): step 1/1. Functionally, catalyzes the reversible conversion of ribose-5-phosphate to ribulose 5-phosphate. The chain is Ribose-5-phosphate isomerase A from Chromobacterium violaceum (strain ATCC 12472 / DSM 30191 / JCM 1249 / CCUG 213 / NBRC 12614 / NCIMB 9131 / NCTC 9757 / MK).